Consider the following 86-residue polypeptide: Small ribosomal subunit protein bS20 (86 aa).

The segment at 1 to 23 (MANIKSSKKDSIKSRKKKKLNAS) is disordered.

Belongs to the bacterial ribosomal protein bS20 family.

Binds directly to 16S ribosomal RNA. The protein is Small ribosomal subunit protein bS20 of Buchnera aphidicola subsp. Baizongia pistaciae (strain Bp).